The primary structure comprises 319 residues: Protein-methionine-sulfoxide reductase catalytic subunit MsrP (319 aa).

The segment at residues 1-40 is a signal peptide (tat-type signal); that stretch reads MHKLNENDVTPEHIFFERRKIIQSMGLMGAASLLPRFSLA. Mo-molybdopterin contacts are provided by residues Asn-73, 76–77, Cys-131, Thr-166, Asn-218, Arg-223, and 234–236; these read YE and NIK.

It belongs to the MsrP family. As to quaternary structure, heterodimer of a catalytic subunit (MsrP) and a heme-binding subunit (MsrQ). Requires Mo-molybdopterin as cofactor. Post-translationally, predicted to be exported by the Tat system. The position of the signal peptide cleavage has not been experimentally proven.

It is found in the periplasm. The catalysed reaction is L-methionyl-[protein] + a quinone + H2O = L-methionyl-(S)-S-oxide-[protein] + a quinol. The enzyme catalyses L-methionyl-[protein] + a quinone + H2O = L-methionyl-(R)-S-oxide-[protein] + a quinol. Part of the MsrPQ system that repairs oxidized periplasmic proteins containing methionine sulfoxide residues (Met-O), using respiratory chain electrons. Thus protects these proteins from oxidative-stress damage caused by reactive species of oxygen and chlorine generated by the host defense mechanisms. MsrPQ is essential for the maintenance of envelope integrity under bleach stress, rescuing a wide series of structurally unrelated periplasmic proteins from methionine oxidation. The catalytic subunit MsrP is non-stereospecific, being able to reduce both (R-) and (S-) diastereoisomers of methionine sulfoxide. In Pasteurella multocida (strain Pm70), this protein is Protein-methionine-sulfoxide reductase catalytic subunit MsrP.